Consider the following 1029-residue polypeptide: MCNVAEDPSSFSTITIATTCRAEWPKVSPCIADGRNHTDCCLKKGVQHDCLEICSGSTKELGVHSVLCLNLDLQAIYQCIRQGYETHPSAPGNVTISELTAHSVTVQWTEPNSNAHLVENYTLFIRKNEHGEAVRTVKNVISPHVELGLDPDSEYVLTLQSHSANGTSLPSTAKLFSTLPTTRPPLCTIGEPIYMNDGRVMICDAVNPCPNGFRCTGAGSDLSYCCPHDGTHSSEEFTSCCKEQKMPESCMSSCQYNMTLPESCKENLNTWVQCASEGHDHLRCCLQEEVSKPCQTACMHPFTVPADECFSEVSKYRTCFSAAHQALPAAVRNVEVSSISKDSATISWEDLEANIIVFRVQLFEKGGNLIKTENSSADIFRFIDLEPNKDYSVRVTAINFLGEGPPSWNATFTTKPAQIYEGDRPVAPEKLRISWNSGPRVNVTWDPVSVRRNAEVVTKPIEYTIYYLDTEQSSTWTTLRTNQTWVVMRDLRKDALYYVYVTAKEDNRTSRSSSIITILAQKDSPGLPEPTIVIEPDHKDGVFSPGEKISINCSLPNIKKHLNIDLTVGSHVVQNDHGALWVILETEADEAMDTATCAVSDTDGRQHVAMKHLVLERKASVTMKKDKIRVLDDQSVEIECIYRGGGLDPKISFEKDGKKASRGFLNLKKTEAGYVAKWHIRKVKQEDAGFYKCVVTSSDGSRVEASSEVIFSTETLPVNPKLILQCCEDEGITGDCLQACNIGRTSLSIKNQNCTRFAVSLLKCASDIRDHSDCCIASGVTSKCLPLCSGDSFSPDIDCSEHAVSIMTCSVKSHEHAPSEVSNVRIKASEGKVNIEWDYPLTKDYKYFAVYYRKAHDDHEDWHKLKTIQQNIELDVDPSEDYEVGILAANALGHSRLMYSAIPKDSEPRRSASKGSSSAFWIVVILVVFGVLIAGLAVLSKRRELPYPIGKFIGRRNDPNQPTVAFENPAYGEPWGGAEVEIRGLGGSATTGTAAATQSEWQSANLEANSTTDNSHEYRNGMRYAKLET.

A signal peptide spans 1-22 (MCNVAEDPSSFSTITIATTCRA). At 23–918 (EWPKVSPCIA…RRSASKGSSS (896 aa)) the chain is on the extracellular side. 4 N-linked (GlcNAc...) asparagine glycosylation sites follow: asparagine 36, asparagine 93, asparagine 120, and asparagine 165. Residues 90-181 (APGNVTISEL…TAKLFSTLPT (92 aa)) form the Fibronectin type-III 1 domain. One can recognise a WR1 domain in the interval 185-227 (PLCTIGEPIYMNDGRVMICDAVNPCPNGFRCTGAGSDLSYCCP). N-linked (GlcNAc...) asparagine glycans are attached at residues asparagine 257, asparagine 374, asparagine 409, asparagine 442, asparagine 482, asparagine 507, and asparagine 552. Fibronectin type-III domains follow at residues 330–417 (AVRN…TKPA) and 427–523 (APEK…AQKD). The Ig-like C2-type domain maps to 619–710 (ASVTMKKDKI…SRVEASSEVI (92 aa)). Cysteine 640 and cysteine 693 are oxidised to a cystine. A glycan (N-linked (GlcNAc...) asparagine) is linked at asparagine 753. In terms of domain architecture, Fibronectin type-III 4 spans 817–909 (APSEVSNVRI…SAIPKDSEPR (93 aa)). The helical transmembrane segment at 919 to 939 (AFWIVVILVVFGVLIAGLAVL) threads the bilayer. Topologically, residues 940–1029 (SKRRELPYPI…NGMRYAKLET (90 aa)) are cytoplasmic. A disordered region spans residues 988–1021 (SATTGTAAATQSEWQSANLEANSTTDNSHEYRNG). Residues 998 to 1013 (QSEWQSANLEANSTTD) show a composition bias toward polar residues.

The protein localises to the cell membrane. This chain is Ig-like and fibronectin type-III domain-containing protein 1, found in Caenorhabditis elegans.